The primary structure comprises 291 residues: Formamidopyrimidine-DNA glycosylase (291 aa).

The active-site Schiff-base intermediate with DNA is the Pro2. Glu3 serves as the catalytic Proton donor. The active-site Proton donor; for beta-elimination activity is Lys58. DNA contacts are provided by His100, Arg123, and Lys166. Residues Ser257–Lys291 form an FPG-type zinc finger. The active-site Proton donor; for delta-elimination activity is Arg281.

It belongs to the FPG family. In terms of assembly, monomer. The cofactor is Zn(2+).

It catalyses the reaction Hydrolysis of DNA containing ring-opened 7-methylguanine residues, releasing 2,6-diamino-4-hydroxy-5-(N-methyl)formamidopyrimidine.. It carries out the reaction 2'-deoxyribonucleotide-(2'-deoxyribose 5'-phosphate)-2'-deoxyribonucleotide-DNA = a 3'-end 2'-deoxyribonucleotide-(2,3-dehydro-2,3-deoxyribose 5'-phosphate)-DNA + a 5'-end 5'-phospho-2'-deoxyribonucleoside-DNA + H(+). Functionally, involved in base excision repair of DNA damaged by oxidation or by mutagenic agents. Acts as a DNA glycosylase that recognizes and removes damaged bases. Has a preference for oxidized purines, such as 7,8-dihydro-8-oxoguanine (8-oxoG). Has AP (apurinic/apyrimidinic) lyase activity and introduces nicks in the DNA strand. Cleaves the DNA backbone by beta-delta elimination to generate a single-strand break at the site of the removed base with both 3'- and 5'-phosphates. In Bartonella henselae (strain ATCC 49882 / DSM 28221 / CCUG 30454 / Houston 1) (Rochalimaea henselae), this protein is Formamidopyrimidine-DNA glycosylase.